The following is a 146-amino-acid chain: MORN repeat-containing protein 4 (146 aa).

4 MORN repeats span residues Tyr16–Thr38, Tyr39–Arg61, Tyr62–Thr84, and Phe85–His107.

In terms of assembly, interacts with MYO3A.

The protein localises to the cytoplasm. Its subcellular location is the cell projection. The protein resides in the filopodium tip. It localises to the stereocilium. Functionally, plays a role in promoting axonal degeneration following neuronal injury by toxic insult or trauma. The chain is MORN repeat-containing protein 4 (Morn4) from Mus musculus (Mouse).